Here is a 237-residue protein sequence, read N- to C-terminus: Ribonuclease 3 (237 aa).

Residues Arg-8–Gly-134 form the RNase III domain. Mg(2+) is bound at residue Glu-47. Residue Asp-51 is part of the active site. Mg(2+) contacts are provided by Asp-120 and Glu-123. The active site involves Glu-123. The DRBM domain maps to Asp-161 to Asn-229.

Belongs to the ribonuclease III family. As to quaternary structure, homodimer. Mg(2+) serves as cofactor.

It localises to the cytoplasm. The catalysed reaction is Endonucleolytic cleavage to 5'-phosphomonoester.. In terms of biological role, digests double-stranded RNA. Involved in the processing of primary rRNA transcript to yield the immediate precursors to the large and small rRNAs (23S and 16S). Processes some mRNAs, and tRNAs when they are encoded in the rRNA operon. Processes pre-crRNA and tracrRNA of type II CRISPR loci if present in the organism. The sequence is that of Ribonuclease 3 from Leifsonia xyli subsp. xyli (strain CTCB07).